A 325-amino-acid polypeptide reads, in one-letter code: tRNA (guanine-N(7)-)-methyltransferase (325 aa).

The disordered stretch occupies residues 1–101; sequence MSEATDKQKQ…LEYPKSPESM (101 aa). The span at 51-69 shows a compositional bias: polar residues; it reads VSTTPEPEQSDSSATTATI. Residues glycine 122, 145-146, 199-200, and cysteine 219 contribute to the S-adenosyl-L-methionine site; these read EI and NA. The active site involves aspartate 222. 297–299 serves as a coordination point for S-adenosyl-L-methionine; the sequence is TEE.

It belongs to the class I-like SAM-binding methyltransferase superfamily. TrmB family. In terms of assembly, forms a complex with TRM82.

It localises to the nucleus. The catalysed reaction is guanosine(46) in tRNA + S-adenosyl-L-methionine = N(7)-methylguanosine(46) in tRNA + S-adenosyl-L-homocysteine. It participates in tRNA modification; N(7)-methylguanine-tRNA biosynthesis. Catalyzes the formation of N(7)-methylguanine at position 46 (m7G46) in tRNA. This is tRNA (guanine-N(7)-)-methyltransferase from Candida albicans (strain SC5314 / ATCC MYA-2876) (Yeast).